We begin with the raw amino-acid sequence, 100 residues long: NADH-quinone oxidoreductase subunit K (100 aa).

The next 3 helical transmembrane spans lie at 1–21 (MIGLNHYLIVSGLLFCIGLAG), 28–48 (ILLLFFSTEIMLNAINIGFVA), and 64–84 (FIIAIAASEVAIGLGLVILWF).

Belongs to the complex I subunit 4L family. As to quaternary structure, NDH-1 is composed of 14 different subunits. Subunits NuoA, H, J, K, L, M, N constitute the membrane sector of the complex.

The protein resides in the cell inner membrane. The enzyme catalyses a quinone + NADH + 5 H(+)(in) = a quinol + NAD(+) + 4 H(+)(out). In terms of biological role, NDH-1 shuttles electrons from NADH, via FMN and iron-sulfur (Fe-S) centers, to quinones in the respiratory chain. The immediate electron acceptor for the enzyme in this species is believed to be ubiquinone. Couples the redox reaction to proton translocation (for every two electrons transferred, four hydrogen ions are translocated across the cytoplasmic membrane), and thus conserves the redox energy in a proton gradient. This chain is NADH-quinone oxidoreductase subunit K, found in Helicobacter pylori (strain B38).